The following is a 616-amino-acid chain: Chaperone protein HscA (616 aa).

It belongs to the heat shock protein 70 family.

In terms of biological role, chaperone involved in the maturation of iron-sulfur cluster-containing proteins. Has a low intrinsic ATPase activity which is markedly stimulated by HscB. Involved in the maturation of IscU. The sequence is that of Chaperone protein HscA from Salmonella arizonae (strain ATCC BAA-731 / CDC346-86 / RSK2980).